The chain runs to 563 residues: Glutamate--tRNA ligase (563 aa).

Positions P61–E94 are disordered. Over residues Q76–E94 the composition is skewed to basic and acidic residues. The short motif at P104–H114 is the 'HIGH' region element.

Belongs to the class-I aminoacyl-tRNA synthetase family. Glutamate--tRNA ligase type 2 subfamily.

The protein resides in the cytoplasm. It carries out the reaction tRNA(Glu) + L-glutamate + ATP = L-glutamyl-tRNA(Glu) + AMP + diphosphate. Catalyzes the attachment of glutamate to tRNA(Glu) in a two-step reaction: glutamate is first activated by ATP to form Glu-AMP and then transferred to the acceptor end of tRNA(Glu). This chain is Glutamate--tRNA ligase, found in Methanosphaera stadtmanae (strain ATCC 43021 / DSM 3091 / JCM 11832 / MCB-3).